The following is a 309-amino-acid chain: Protein FdhE homolog (309 aa).

The protein belongs to the FdhE family.

It is found in the cytoplasm. In terms of biological role, necessary for formate dehydrogenase activity. The sequence is that of Protein FdhE homolog from Enterobacter sp. (strain 638).